We begin with the raw amino-acid sequence, 61 residues long: Large ribosomal subunit protein uL30 (61 aa).

It belongs to the universal ribosomal protein uL30 family. In terms of assembly, part of the 50S ribosomal subunit.

The chain is Large ribosomal subunit protein uL30 from Corynebacterium jeikeium (strain K411).